Reading from the N-terminus, the 565-residue chain is Proline--tRNA ligase (565 aa).

It belongs to the class-II aminoacyl-tRNA synthetase family. ProS type 1 subfamily. As to quaternary structure, homodimer.

The protein resides in the cytoplasm. The enzyme catalyses tRNA(Pro) + L-proline + ATP = L-prolyl-tRNA(Pro) + AMP + diphosphate. Catalyzes the attachment of proline to tRNA(Pro) in a two-step reaction: proline is first activated by ATP to form Pro-AMP and then transferred to the acceptor end of tRNA(Pro). As ProRS can inadvertently accommodate and process non-cognate amino acids such as alanine and cysteine, to avoid such errors it has two additional distinct editing activities against alanine. One activity is designated as 'pretransfer' editing and involves the tRNA(Pro)-independent hydrolysis of activated Ala-AMP. The other activity is designated 'posttransfer' editing and involves deacylation of mischarged Ala-tRNA(Pro). The misacylated Cys-tRNA(Pro) is not edited by ProRS. In Lactobacillus acidophilus (strain ATCC 700396 / NCK56 / N2 / NCFM), this protein is Proline--tRNA ligase.